Consider the following 506-residue polypeptide: Histidine ammonia-lyase (506 aa).

A cross-link (5-imidazolinone (Ala-Gly)) is located at residues 143–145; sequence ASG. At S144 the chain carries 2,3-didehydroalanine (Ser).

The protein belongs to the PAL/histidase family. Post-translationally, contains an active site 4-methylidene-imidazol-5-one (MIO), which is formed autocatalytically by cyclization and dehydration of residues Ala-Ser-Gly.

Its subcellular location is the cytoplasm. It carries out the reaction L-histidine = trans-urocanate + NH4(+). The protein operates within amino-acid degradation; L-histidine degradation into L-glutamate; N-formimidoyl-L-glutamate from L-histidine: step 1/3. The protein is Histidine ammonia-lyase of Salmonella arizonae (strain ATCC BAA-731 / CDC346-86 / RSK2980).